The following is a 63-amino-acid chain: Metallothionein (63 aa).

Residues 1–30 form a beta region; it reads MDPQDCTCAAGDSCSCAGSCKCKNCRCRSC. A divalent metal cation-binding residues include Cys6, Cys8, Cys14, Cys16, Cys20, Cys22, Cys25, Cys27, Cys30, Cys34, Cys35, Cys37, Cys38, Cys42, Cys45, Cys49, Cys51, Cys59, Cys61, and Cys62. Positions 31–63 are alpha; it reads RKSCCSCCPAGCNNCAKGCVCKEPASSKCSCCH.

The protein belongs to the metallothionein superfamily. Type 1 family.

In terms of biological role, metallothioneins have a high content of cysteine residues that bind various heavy metals. The chain is Metallothionein from Anas platyrhynchos (Mallard).